The chain runs to 31 residues: Photosystem II reaction center protein T (31 aa).

A helical transmembrane segment spans residues 3 to 23; that stretch reads ALVYTFLLVGTLGIIFFSIFF.

This sequence belongs to the PsbT family. PSII is composed of 1 copy each of membrane proteins PsbA, PsbB, PsbC, PsbD, PsbE, PsbF, PsbH, PsbI, PsbJ, PsbK, PsbL, PsbM, PsbT, PsbY, PsbZ, Psb30/Ycf12, at least 3 peripheral proteins of the oxygen-evolving complex and a large number of cofactors. It forms dimeric complexes.

It is found in the plastid. Its subcellular location is the chloroplast thylakoid membrane. In terms of biological role, found at the monomer-monomer interface of the photosystem II (PS II) dimer, plays a role in assembly and dimerization of PSII. PSII is a light-driven water plastoquinone oxidoreductase, using light energy to abstract electrons from H(2)O, generating a proton gradient subsequently used for ATP formation. The polypeptide is Photosystem II reaction center protein T (Tupiella akineta (Green alga)).